The sequence spans 370 residues: Trans-enoyl reductase xenG (370 aa).

Residues Met1 to Arg32 form a disordered region. NADP(+) is bound by residues Cys54–Lys57, Ser177–Ser180, Ser200–Asn203, Tyr218, Phe265–Glu266, and Val356–Ser357.

This sequence belongs to the zinc-containing alcohol dehydrogenase family. In terms of assembly, monomer.

Its pathway is mycotoxin biosynthesis. Its function is as follows. Trans-enoyl reductase; part of the gene cluster that mediates the biosynthesis of xenoacremones such as xenoacremone A, a compound that shows inhibitory activity toward the PI3K/AKT signaling pathway and which has the ability to induce apoptosis of A549 lung cancer cells. Within the pathway, cooperation of the hybrid PKS-NRPS xenE and the trans-acting enoyl reductase xenG is responsible for the formation of the reduced tyrosine-nonaketide derivative. The alpha/beta hydrolase xenA then accelerates intramolecular nucleophilic attack to give a pyrrolidone derivative. Subsequently, three enzymes, xenF, xenD, and xenC, coordinately participate in the conversion to xenoacremone B. XenF catalyzes sigmatropic rearrangement to form an A-ring, which leads to an unusual intermediate with a hexane ring, which is required for the formation of the tricarbocyclic product. Epoxidation catalyzed by xenD and the formation of the paracyclophane ether catalyzed by xenC initiate a spontaneous intramolecular Diels-Alder (IMDA) reaction to yield xenoacremone B. Spontaneous hydration of xenoacremone B leads to the formation of xenoacremone A, which undergoes subsequent methylation to afford xenoacremone C. The protein is Trans-enoyl reductase xenG of Xenoacremonium sinensis (Endophyte fungus).